The chain runs to 133 residues: Small ribosomal subunit protein uS19 (133 aa).

Belongs to the universal ribosomal protein uS19 family.

Its function is as follows. Protein S19 forms a complex with S13 that binds strongly to the 16S ribosomal RNA. The protein is Small ribosomal subunit protein uS19 of Thermococcus gammatolerans (strain DSM 15229 / JCM 11827 / EJ3).